The following is a 404-amino-acid chain: Glucose-1-phosphate adenylyltransferase (404 aa).

Alpha-D-glucose 1-phosphate is bound by residues Y99, G164, 179–180 (EK), and S197.

The protein belongs to the bacterial/plant glucose-1-phosphate adenylyltransferase family.

It carries out the reaction alpha-D-glucose 1-phosphate + ATP + H(+) = ADP-alpha-D-glucose + diphosphate. It participates in capsule biogenesis; capsule polysaccharide biosynthesis. It functions in the pathway glycan biosynthesis; glycogen biosynthesis. Functionally, involved in the biosynthesis of ADP-glucose, a building block, required in the biosynthesis of maltose-1-phosphate (M1P) and in the elongation reactions to produce linear alpha-1,4-glucans. Catalyzes the reaction between ATP and alpha-D-glucose 1-phosphate (G1P) to produce pyrophosphate and ADP-Glc. The polypeptide is Glucose-1-phosphate adenylyltransferase (Mycolicibacterium paratuberculosis (strain ATCC BAA-968 / K-10) (Mycobacterium paratuberculosis)).